The following is a 460-amino-acid chain: Bifunctional protein GlmU (460 aa).

The pyrophosphorylase stretch occupies residues 1–235 (MALSAAIVLA…PLTVEGVNDR (235 aa)). Residues 9-12 (LAAG), Lys-23, Gln-76, and 81-82 (GT) contribute to the UDP-N-acetyl-alpha-D-glucosamine site. Position 109 (Asp-109) interacts with Mg(2+). The UDP-N-acetyl-alpha-D-glucosamine site is built by Gly-146, Glu-161, Asn-176, and Asn-233. Asn-233 contributes to the Mg(2+) binding site. Residues 236–256 (VQLAALSKTYNRRVCERWMRD) form a linker region. An N-acetyltransferase region spans residues 257 to 460 (GVTILDPETT…VEGWKPAWER (204 aa)). Arg-338 and Lys-356 together coordinate UDP-N-acetyl-alpha-D-glucosamine. The Proton acceptor role is filled by His-368. Residues Tyr-371 and Asn-382 each contribute to the UDP-N-acetyl-alpha-D-glucosamine site. Acetyl-CoA contacts are provided by residues 391-392 (NY) and Ala-428.

This sequence in the N-terminal section; belongs to the N-acetylglucosamine-1-phosphate uridyltransferase family. It in the C-terminal section; belongs to the transferase hexapeptide repeat family. In terms of assembly, homotrimer. Mg(2+) serves as cofactor.

It is found in the cytoplasm. The enzyme catalyses alpha-D-glucosamine 1-phosphate + acetyl-CoA = N-acetyl-alpha-D-glucosamine 1-phosphate + CoA + H(+). It carries out the reaction N-acetyl-alpha-D-glucosamine 1-phosphate + UTP + H(+) = UDP-N-acetyl-alpha-D-glucosamine + diphosphate. Its pathway is nucleotide-sugar biosynthesis; UDP-N-acetyl-alpha-D-glucosamine biosynthesis; N-acetyl-alpha-D-glucosamine 1-phosphate from alpha-D-glucosamine 6-phosphate (route II): step 2/2. It functions in the pathway nucleotide-sugar biosynthesis; UDP-N-acetyl-alpha-D-glucosamine biosynthesis; UDP-N-acetyl-alpha-D-glucosamine from N-acetyl-alpha-D-glucosamine 1-phosphate: step 1/1. It participates in bacterial outer membrane biogenesis; LPS lipid A biosynthesis. Functionally, catalyzes the last two sequential reactions in the de novo biosynthetic pathway for UDP-N-acetylglucosamine (UDP-GlcNAc). The C-terminal domain catalyzes the transfer of acetyl group from acetyl coenzyme A to glucosamine-1-phosphate (GlcN-1-P) to produce N-acetylglucosamine-1-phosphate (GlcNAc-1-P), which is converted into UDP-GlcNAc by the transfer of uridine 5-monophosphate (from uridine 5-triphosphate), a reaction catalyzed by the N-terminal domain. This chain is Bifunctional protein GlmU, found in Bifidobacterium longum (strain DJO10A).